The primary structure comprises 314 residues: ATP synthase gamma chain (314 aa).

Belongs to the ATPase gamma chain family. In terms of assembly, F-type ATPases have 2 components, CF(1) - the catalytic core - and CF(0) - the membrane proton channel. CF(1) has five subunits: alpha(3), beta(3), gamma(1), delta(1), epsilon(1). CF(0) has three main subunits: a, b and c.

The protein resides in the cell membrane. Its function is as follows. Produces ATP from ADP in the presence of a proton gradient across the membrane. The gamma chain is believed to be important in regulating ATPase activity and the flow of protons through the CF(0) complex. The polypeptide is ATP synthase gamma chain (Lactiplantibacillus plantarum (strain ATCC BAA-793 / NCIMB 8826 / WCFS1) (Lactobacillus plantarum)).